The sequence spans 404 residues: Argininosuccinate synthase (404 aa).

Residues 10-18 (AYSGGVDTS) and Ala38 contribute to the ATP site. L-citrulline is bound at residue Tyr89. An ATP-binding site is contributed by Gly119. Positions 121, 125, and 126 each coordinate L-aspartate. Asn125 contacts L-citrulline. The L-citrulline site is built by Arg129, Ser177, Ser186, Glu262, and Tyr274.

The protein belongs to the argininosuccinate synthase family. Type 1 subfamily. Homotetramer.

Its subcellular location is the cytoplasm. It catalyses the reaction L-citrulline + L-aspartate + ATP = 2-(N(omega)-L-arginino)succinate + AMP + diphosphate + H(+). It participates in amino-acid biosynthesis; L-arginine biosynthesis; L-arginine from L-ornithine and carbamoyl phosphate: step 2/3. The polypeptide is Argininosuccinate synthase (Prochlorococcus marinus subsp. pastoris (strain CCMP1986 / NIES-2087 / MED4)).